The sequence spans 152 residues: Probable flagellum biosynthesis repressor protein FlbT (152 aa).

Belongs to the FlbT family.

In terms of biological role, has a post-transcriptional repressor function in flagellum biogenesis. Associates with the 5'-UTR of fljK mRNA and promotes its degradation. The polypeptide is Probable flagellum biosynthesis repressor protein FlbT (Brucella canis (strain ATCC 23365 / NCTC 10854 / RM-666)).